A 108-amino-acid polypeptide reads, in one-letter code: Parvalbumin alpha (108 aa).

Residue Ala-1 is modified to N-acetylalanine. 2 EF-hand domains span residues 37–72 (MSAN…FAAD) and 76–108 (LTDA…VHEA). The Ca(2+) site is built by Asp-50, Asp-52, Ser-54, Phe-56, Glu-58, Glu-61, Asp-89, Asp-91, Asp-93, Lys-95, and Glu-100.

The protein belongs to the parvalbumin family.

In terms of biological role, in muscle, parvalbumin is thought to be involved in relaxation after contraction. It binds two calcium ions. The chain is Parvalbumin alpha from Esox lucius (Northern pike).